Here is a 942-residue protein sequence, read N- to C-terminus: Valine--tRNA ligase (942 aa).

The 'HIGH' region signature appears at 43–53 (PNVTGTLHMGH). Residues 551–555 (KMSKS) carry the 'KMSKS' region motif. ATP is bound at residue lysine 554. Positions 876-942 (EGLVDLDAER…AGLREQRAKL (67 aa)) form a coiled coil.

This sequence belongs to the class-I aminoacyl-tRNA synthetase family. ValS type 1 subfamily. In terms of assembly, monomer.

Its subcellular location is the cytoplasm. It catalyses the reaction tRNA(Val) + L-valine + ATP = L-valyl-tRNA(Val) + AMP + diphosphate. Catalyzes the attachment of valine to tRNA(Val). As ValRS can inadvertently accommodate and process structurally similar amino acids such as threonine, to avoid such errors, it has a 'posttransfer' editing activity that hydrolyzes mischarged Thr-tRNA(Val) in a tRNA-dependent manner. The chain is Valine--tRNA ligase from Stenotrophomonas maltophilia (strain K279a).